An 89-amino-acid chain; its full sequence is Cell division topological specificity factor (89 aa).

The protein belongs to the MinE family.

Prevents the cell division inhibition by proteins MinC and MinD at internal division sites while permitting inhibition at polar sites. This ensures cell division at the proper site by restricting the formation of a division septum at the midpoint of the long axis of the cell. This Klebsiella pneumoniae (strain 342) protein is Cell division topological specificity factor.